A 498-amino-acid chain; its full sequence is MPGAVDFKERISRQRPHDRETYGHAGNTDLQDIVYQLESDRGRIVNSAAVRRLQQKTQVFPLERNAAVRSRLTHSLEVQQTGRFIVRTLFRQLGPRAAEVGLDGLEGALESLVEMACLMHDVGNPPFGHFGEYAINDWFERNLDALFERRIPPGQGDGLLQQRMLTDLKHFEGNAQAIRLVVKLLRLNLTYTQTAGLLKYVRPAYEPKPDKAAANHYLNKKPGFYLSEEAFVDELRRVLGMRPGTRHPVAYIMEAADDISYCLADIEDSVEKGILDIRQLADLLVKKFAVHHSPDAPIPGDADNMSFQRMVDYSLEKAEREPINKVSEFFIRLRVKMIHPLVQHAAQQFIDNFEAVHAGTLGRALMEDGSLPHAIVQTFKDVAMEWVFCHPEVETLELQGYRIIQGLLDFYAPLLRLPAEEFQALAEGRQAAAPHPQLLVRRLPSQQIKAYLEAMKGVAEDPLQRQWEFYHRCRMLQDFVSGMTDQHAQDEYRALSAL.

The 192-residue stretch at 71-262 (RLTHSLEVQQ…MEAADDISYC (192 aa)) folds into the HD domain.

The protein belongs to the dGTPase family. Type 1 subfamily. Requires Mg(2+) as cofactor.

The catalysed reaction is dGTP + H2O = 2'-deoxyguanosine + triphosphate + H(+). In terms of biological role, dGTPase preferentially hydrolyzes dGTP over the other canonical NTPs. The sequence is that of Probable deoxyguanosinetriphosphate triphosphohydrolase from Pseudomonas aeruginosa (strain ATCC 15692 / DSM 22644 / CIP 104116 / JCM 14847 / LMG 12228 / 1C / PRS 101 / PAO1).